The sequence spans 94 residues: Putative pterin-4-alpha-carbinolamine dehydratase (94 aa).

It belongs to the pterin-4-alpha-carbinolamine dehydratase family.

It catalyses the reaction (4aS,6R)-4a-hydroxy-L-erythro-5,6,7,8-tetrahydrobiopterin = (6R)-L-erythro-6,7-dihydrobiopterin + H2O. The polypeptide is Putative pterin-4-alpha-carbinolamine dehydratase (Mycobacterium sp. (strain KMS)).